The primary structure comprises 317 residues: Transcription factor EC (317 aa).

The necessary for transcriptional transactivation stretch occupies residues M1–I90. The 54-residue stretch at Q110–L163 folds into the bHLH domain. The segment at T242–L317 is necessary for transcriptional transactivation.

It belongs to the MiT/TFE family. Homodimer. Forms heterodimers with TFE3. Forms heterodimers with MITF. Interacts with MITF. Expressed in kidney, spleen, lung, liver, testis and muscle.

It is found in the nucleus. Transcriptional regulator that acts as a repressor or an activator. Acts as a transcriptional repressor on minimal promoter containing mu E3 enhancer sequence. Binds to mu E3 DNA sequence of the immunoglobulin heavy-chain gene enhancer. Acts as a transcriptional transactivator on the proximal promoter region of the tartrate-resistant acid phosphatase (TRAP) E-box containing promoter. Collaborates with MITF in target gene activation. Acts as a transcriptional repressor on minimal promoter containing mu E3 enhancer sequence. Binds to mu E3 DNA sequence of the immunoglobulin heavy-chain gene enhancer. Binds DNA in a homo- or heterodimeric form. This is Transcription factor EC (Tfec) from Rattus norvegicus (Rat).